The following is a 124-amino-acid chain: Large ribosomal subunit protein bL19 (124 aa).

Belongs to the bacterial ribosomal protein bL19 family.

Its function is as follows. This protein is located at the 30S-50S ribosomal subunit interface and may play a role in the structure and function of the aminoacyl-tRNA binding site. The polypeptide is Large ribosomal subunit protein bL19 (Orientia tsutsugamushi (strain Boryong) (Rickettsia tsutsugamushi)).